Reading from the N-terminus, the 1222-residue chain is Alpha-mannosidase D (1222 aa).

Residues 1–21 (MESSKFVKIIWVFGIWILVFT) form the signal peptide. At 22–1170 (FLIIYNNYDY…KYNRPNHLAL (1149 aa)) the chain is on the extracellular side. Zn(2+) is bound by residues H71 and D73. An N-linked (GlcNAc...) asparagine glycan is attached at N175. 2 residues coordinate Zn(2+): D185 and H453. The active-site Nucleophile is D185. N492, N496, N547, N551, N566, N613, N665, N768, N785, N952, N981, N1069, and N1084 each carry an N-linked (GlcNAc...) asparagine glycan. Residues 493-549 (KSNNKTNNNNNNNNKNNNNNNNNNNNNNNNLKNTNSISTTGSSSSSGSGSSNNNNNT) show a composition bias toward low complexity. A disordered region spans residues 493-554 (KSNNKTNNNN…NNNNTVNKSE (62 aa)). Residues 1171 to 1191 (ILSLSIGIPAGILIIVIALVV) form a helical membrane-spanning segment. Topologically, residues 1192 to 1222 (TYKKRKNRKTLTSSNSSSNLIQQEDQTDYSP) are cytoplasmic. A compositionally biased stretch (low complexity) spans 1202–1211 (LTSSNSSSNL). Residues 1202-1222 (LTSSNSSSNLIQQEDQTDYSP) are disordered. A compositionally biased stretch (polar residues) spans 1212-1222 (IQQEDQTDYSP).

The protein belongs to the glycosyl hydrolase 38 family. It depends on Zn(2+) as a cofactor.

It is found in the membrane. It carries out the reaction Hydrolysis of terminal, non-reducing alpha-D-mannose residues in alpha-D-mannosides.. This chain is Alpha-mannosidase D (manD), found in Dictyostelium discoideum (Social amoeba).